A 165-amino-acid chain; its full sequence is MPAKTTSARLTHLDDAGLPTMVDVSDKQVTARSATAESRVHFPAAVAAQLRANGLRSAKGGIVETAVIAGTMAVKRTHELIPFCHPLPIDGCRFEIDWAGAQVLQIVCTVRCVHRTGVEMEALTGASVAALTVYDMCKALSHTMRIGPTKLLSKRGGKRDIGAAR.

Residues 83 to 85 (FCH) and 120 to 121 (ME) each bind substrate. Residue Asp135 is part of the active site.

Belongs to the MoaC family. As to quaternary structure, homohexamer; trimer of dimers.

It catalyses the reaction (8S)-3',8-cyclo-7,8-dihydroguanosine 5'-triphosphate = cyclic pyranopterin phosphate + diphosphate. It participates in cofactor biosynthesis; molybdopterin biosynthesis. In terms of biological role, catalyzes the conversion of (8S)-3',8-cyclo-7,8-dihydroguanosine 5'-triphosphate to cyclic pyranopterin monophosphate (cPMP). The protein is Cyclic pyranopterin monophosphate synthase of Xanthomonas campestris pv. campestris (strain 8004).